The primary structure comprises 671 residues: Zinc finger protein 750 (671 aa).

The CCHC-type zinc finger occupies 25 to 51 (YKCFQCPFTCNEKSHLFNHMKYGLCKN). Residues Cys27, Cys30, His43, and Cys49 each contribute to the Zn(2+) site. Disordered stretches follow at residues 66–87 (PKVNSTDQKQPSNEPFAKSPVP), 366–433 (ETSP…KDFT), and 592–671 (SSPG…PRVS). Composition is skewed to polar residues over residues 67-78 (KVNSTDQKQPSN) and 402-412 (SPTNFTQNSQG).

The protein localises to the nucleus. Transcription factor involved in epidermis differentiation. This Xenopus tropicalis (Western clawed frog) protein is Zinc finger protein 750 (znf750).